Consider the following 196-residue polypeptide: Ribosome maturation factor RimP (196 aa).

Residues leucine 164 to glutamate 196 form a disordered region. Basic residues predominate over residues glycine 173 to lysine 182.

Belongs to the RimP family.

It is found in the cytoplasm. Required for maturation of 30S ribosomal subunits. This chain is Ribosome maturation factor RimP, found in Xanthomonas oryzae pv. oryzae (strain MAFF 311018).